We begin with the raw amino-acid sequence, 443 residues long: Putative transporter AmpG 1 (443 aa).

13 consecutive transmembrane segments (helical) span residues 5–25, 42–62, 78–98, 104–124, 143–163, 171–191, 230–250, 254–274, 299–319, 324–344, 354–374, 393–413, and 415–435; these read SHIY…MITG, IGML…APVF, LSWI…LSFL, LVLL…QDTI, GIYI…AIYL, AIYK…ILVA, FNYF…GFYF, DINL…YRLP, VCKF…GIIM, ILYS…FFIL, ILFI…TAYI, LSSM…YMVV, and FGWQ…LLIL.

Belongs to the major facilitator superfamily.

Its subcellular location is the cell inner membrane. This chain is Putative transporter AmpG 1 (ampG1), found in Rickettsia prowazekii (strain Madrid E).